A 686-amino-acid chain; its full sequence is Cation channel sperm-associated protein 1 (686 aa).

Residues 1 to 15 (MDQSSRRDESYHETH) show a composition bias toward basic and acidic residues. Disordered stretches follow at residues 1–57 (MDQS…QQPY), 97–177 (TLPN…NRDH), 207–271 (DHHH…KSTA), and 289–318 (QSRESLRESASLSEGEDHVQKRKKAQRAHK). Residues 1–351 (MDQSSRRDES…QMILSLTQSL (351 aa)) are Cytoplasmic-facing. Basic residues predominate over residues 25–35 (SHPHPHPHPTL). The segment covering 128–142 (DPNHHPHQDDPHRPS) has biased composition (basic and acidic residues). A compositionally biased stretch (polar residues) spans 147 to 160 (HPSSTGSHQGTTHQ). Basic residues-rich tracts occupy residues 211–229 (EGHHAHSHHGEHPHHKEQR) and 235–244 (HMHHHIHHRS). The segment covering 245-271 (PSASQLSHKSHSTLATSPSHVGSKSTA) has biased composition (polar residues). The span at 308–318 (QKRKKAQRAHK) shows a compositional bias: basic residues. The chain crosses the membrane as a helical span at residues 352-373 (GFETFIFIVVCLNTVILVAQTF). The Extracellular segment spans residues 374–382 (TELEIRGEW). A helical membrane pass occupies residues 383 to 404 (YFMVLDSIFLSIYVLEAVLKLI). Topologically, residues 405–412 (ALGLEYFY) are cytoplasmic. A helical transmembrane segment spans residues 413–435 (DPWNNLDFFIMVMAVLDFVLLQI). At 436-446 (NSLSYSFYNHS) the chain is on the extracellular side. Residues 447–469 (LFRILKVFKSMRALRAIRVLRRL) form a helical membrane-spanning segment. Topologically, residues 470–487 (SILTSLHEVAGTLSGSLP) are cytoplasmic. A helical membrane pass occupies residues 488–510 (SITAILTLMFTCLFLFSVVLRAL). Residues 511–521 (FQDSDPKRFQN) are Extracellular-facing. Residues 522–534 (IFTTLFTLFTMLT) constitute an intramembrane region (helical; Pore-forming). Residues 535–551 (LDDWSLIYIDNRAQGAW) lie on the Extracellular side of the membrane. The helical transmembrane segment at 552–577 (YIIPILMIYIVIQYFIFLNLVIAVLV) threads the bilayer. Residues 578–686 (DNFQMALLKG…FEAGDDDYGK (109 aa)) are Cytoplasmic-facing.

It belongs to the cation channel sperm-associated (TC 1.A.1.19) family. As to quaternary structure, component of the CatSper complex or CatSpermasome composed of the core pore-forming members CATSPER1, CATSPER2, CATSPER3 and CATSPER4 as well as auxiliary members CATSPERB, CATSPERG2, CATSPERD, CATSPERE, CATSPERZ, C2CD6/CATSPERT, SLCO6C1, TMEM249, TMEM262 and EFCAB9. HSPA1 may be an additional auxiliary complex member. The core complex members CATSPER1, CATSPER2, CATSPER3 and CATSPER4 form a heterotetrameric channel. The auxiliary CATSPERB, CATSPERG2, CATSPERD and CATSPERE subunits form a pavilion-like structure over the pore which stabilizes the complex through interactions with CATSPER4, CATSPER3, CATSPER1 and CATSPER2 respectively. SLCO6C1 interacts with CATSPERE, and TMEM262/CATSPERH interacts with CATSPERB, further stabilizing the complex. C2CD6/CATSPERT interacts at least with CATSPERD and is required for targeting the CatSper complex in the flagellar membrane. Interacts with Ca(v)3.3/CACNA1I, leading to suppression of T-type calcium channel activity. Testis-specific.

It is found in the cell projection. It localises to the cilium. The protein localises to the flagellum membrane. It catalyses the reaction Ca(2+)(in) = Ca(2+)(out). Its activity is regulated as follows. Activated by intracellular alkalinization. In contrast to the human ortholog, not activated by progesterone. Pore-forming subunit of the CatSper complex, a sperm-specific voltage-gated calcium channel that plays a central role in sperm cell hyperactivation. Controls calcium entry to mediate the hyperactivated motility, a step needed for sperm motility which is essential late in the preparation of sperm for fertilization. The sequence is that of Cation channel sperm-associated protein 1 (Catsper1) from Mus musculus (Mouse).